We begin with the raw amino-acid sequence, 329 residues long: VVSAGLIAGDFVTVLQALPRSEHQVVAVAARDLRRAEEFARTHGIPKAYGSYEELAKDPDVEVAYIGTQHPQHKAAVLLFLAAGKAVLCEKPLGVNAAEVREMVAEARSRGLFLMEAIWTRCFPAVDALKSLLAQGALGDLRVARAEFGENLTQVLRSVDWAQAGGGLLDLGIYCVQFISMVFGGQKPEKISAVGRRYETGVDDTVTVLLQYPGGVHGSFTCSISSKLSNTCSVSGTKGIAQLLEPCWCPTELVVNKERKEFPLAPEENKKFNYRNGMGMSYEAQHVRDCLRKGLKESPVIPLAESQLLADILEEVRKAIGVTFPQDKH.

It belongs to the Gfo/Idh/MocA family. As to quaternary structure, homodimer. Lens, liver and small intestine.

It catalyses the reaction (1R,2R)-1,2-dihydrobenzene-1,2-diol + NADP(+) = catechol + NADPH + H(+). The catalysed reaction is D-xylose + NADP(+) = D-xylono-1,5-lactone + NADPH + H(+). Stimulated by various salts. The sequence is that of Trans-1,2-dihydrobenzene-1,2-diol dehydrogenase (DHDH) from Oryctolagus cuniculus (Rabbit).